The primary structure comprises 340 residues: Cell division protein FtsQ (340 aa).

The interval Met1–Pro41 is disordered. At Met1–Pro55 the chain is on the cytoplasmic side. A compositionally biased stretch (pro residues) spans Pro19 to Pro32. Residues Leu56 to Leu78 traverse the membrane as a helical segment. The Periplasmic segment spans residues Ser79–Gly340. Residues Phe104–Arg172 form the POTRA domain. The segment at Arg308–Gly340 is disordered. Residues Ala324–Ala333 are compositionally biased toward low complexity.

This sequence belongs to the FtsQ/DivIB family. FtsQ subfamily.

It localises to the cell inner membrane. In terms of biological role, essential cell division protein. In Paracoccus denitrificans (strain Pd 1222), this protein is Cell division protein FtsQ.